The sequence spans 437 residues: Repulsive guidance molecule B (437 aa).

The first 45 residues, 1–45 (MGLRAAPSSAAAAAAEVEQRRSPGLCPPPLELLLLLLFSLGLLHA), serve as a signal peptide directing secretion. Asn120 carries N-linked (GlcNAc...) asparagine glycosylation. A compositionally biased stretch (polar residues) spans 121 to 133 (CSKDGPTSSTNPE). The segment at 121-153 (CSKDGPTSSTNPEVTHDPCNYHSHAGAREHRRG) is disordered. 2 disulfide bridges follow: Cys139–Cys226 and Cys163–Cys312. N-linked (GlcNAc...) asparagine glycosylation is present at Asn383. The GPI-anchor amidated asparagine moiety is linked to residue Asn413. Positions 414 to 437 (GTPRGGSDLSVSLGLTCLILIVFL) are cleaved as a propeptide — removed in mature form.

This sequence belongs to the repulsive guidance molecule (RGM) family. In terms of assembly, homooligomer. Interacts with DRGX. Interacts with BMP2 and BMP4. Interacts with the BMP type I receptors ACVR1, BMPR1A and BMPR1B and with the BMP type II receptor ACVR2B. The functional complex with its receptor NEO1/neogenin appears to be a heterotetramer with a 2:2 stoichiometry, RGM molecules acting as staples that bring two NEO1 receptors together without interacting themselves, this arrangement leads to activation of downstream signaling via RhoA. GPI-anchored. In terms of processing, autocatalytically cleaved at low pH; the two chains remain linked via two disulfide bonds.

The protein localises to the cell membrane. The protein resides in the membrane raft. Functionally, member of the repulsive guidance molecule (RGM) family that contributes to the patterning of the developing nervous system. Acts as a bone morphogenetic protein (BMP) coreceptor that potentiates BMP signaling. Promotes neuronal adhesion. May inhibit neurite outgrowth. The polypeptide is Repulsive guidance molecule B (Homo sapiens (Human)).